The following is a 316-amino-acid chain: Alkaline ceramidase YPC1 (316 aa).

The Lumenal portion of the chain corresponds to 1–36 (MGIFRWNYPESSVPGVWGETTSTIDWCEENYVVSPY). A disulfide bridge connects residues Cys27 and Cys219. The stretch at 37–57 (IAEWSNTLTNSVFILSAIYTT) is an intramembrane region. The Lumenal portion of the chain corresponds to 58-68 (YSAYKNKLEKR). An intramembrane segment occupies 69 to 89 (FLLIGFGYGLVGVGSWLFHMT). The Lumenal portion of the chain corresponds to 90 to 93 (LKYR). Residues 94 to 114 (FQLLDELPMIYAMCIPTWSLV) traverse the membrane as a helical segment. The Cytoplasmic segment spans residues 115-135 (CEAKEALLNGDNHKKVPLFEQ). A helical membrane pass occupies residues 136-156 (IFIGVIIGLAVTTASILYVIY). The Lumenal segment spans residues 157 to 160 (KNVD). An intramembrane segment occupies 161-181 (IHQILFGVQIVVVAATAGSLT). At 182-195 (YRYVHDPLAKRNLK) the chain is on the lumenal side. The stretch at 196-216 (ASMALGAILFLSGYISWLLDI) is an intramembrane region. Over 217–228 (HYCSFWVHVRRS) the chain is Lumenal. A helical transmembrane segment spans residues 229 to 249 (ILALPLGVLLEPHGWWHILTG). At 250–316 (MGIYFYIVSL…DQSIEVKKEK (67 aa)) the chain is on the cytoplasmic side.

The protein belongs to the alkaline ceramidase family.

The protein resides in the endoplasmic reticulum membrane. The enzyme catalyses N-hexanoyl-sphinganine + H2O = hexanoate + sphinganine. It carries out the reaction sphinganine + hexadecanoate = N-hexadecanoylsphinganine + H2O. The catalysed reaction is N-hexadecanoyl-(4R)-hydroxysphinganine + H2O = (4R)-hydroxysphinganine + hexadecanoate. It catalyses the reaction N-hexadecanoylsphing-4-enine + H2O = sphing-4-enine + hexadecanoate. The enzyme catalyses an N-acyl-(4R)-4-hydroxysphinganine + H2O = (4R)-hydroxysphinganine + a fatty acid. Alkaline ceramidase that hydrolyzes phytoceramide and also dihydroceramide into phytosphingosine or dihydrosphingosine. Prefers phytoceramide. Also has reverse activity as acyl-CoA-independent ceramide synthase, catalyzing synthesis of phytoceramide and dihydroceramide from palmitic acid and phytosphingosine or dihydrosphingosine. Is not responsible for the breakdown of unsaturated ceramide. Preferentially uses very long chain fatty acids (C-24 and C-26) in vivo compared to C-16 in vitro. This chain is Alkaline ceramidase YPC1 (YPC1), found in Saccharomyces cerevisiae (strain ATCC 204508 / S288c) (Baker's yeast).